The primary structure comprises 111 residues: Cytochrome c 2.1 (111 aa).

Serine 2 is subject to N-acetylserine. Heme c-binding residues include cysteine 20, cysteine 23, histidine 24, and methionine 85.

It belongs to the cytochrome c family. Binds 1 heme c group covalently per subunit.

The protein localises to the mitochondrion intermembrane space. Functionally, electron carrier protein. The oxidized form of the cytochrome c heme group can accept an electron from the heme group of the cytochrome c1 subunit of cytochrome reductase. Cytochrome c then transfers this electron to the cytochrome oxidase complex, the final protein carrier in the mitochondrial electron-transport chain. The sequence is that of Cytochrome c 2.1 (cyc-2.1) from Caenorhabditis elegans.